A 652-amino-acid polypeptide reads, in one-letter code: UvrABC system protein C (652 aa).

Positions 37–116 constitute a GIY-YIG domain; it reads KSSGCYLFKD…IKTNKPYFNI (80 aa). The region spanning 226–261 is the UVR domain; it reads DDLEIFLQKKMLQFSNDLDYENAAKIRDQISGLKLL.

The protein belongs to the UvrC family. In terms of assembly, interacts with UvrB in an incision complex.

It is found in the cytoplasm. In terms of biological role, the UvrABC repair system catalyzes the recognition and processing of DNA lesions. UvrC both incises the 5' and 3' sides of the lesion. The N-terminal half is responsible for the 3' incision and the C-terminal half is responsible for the 5' incision. In Prochlorococcus marinus (strain MIT 9312), this protein is UvrABC system protein C.